The following is a 491-amino-acid chain: Protein nucleotidyltransferase YdiU (491 aa).

Positions 94, 96, 97, 117, 129, 130, 180, and 187 each coordinate ATP. Asp256 (proton acceptor) is an active-site residue. Asn257 and Asp266 together coordinate Mg(2+). Residue Asp266 coordinates ATP.

Belongs to the SELO family. The cofactor is Mg(2+). It depends on Mn(2+) as a cofactor.

It carries out the reaction L-seryl-[protein] + ATP = 3-O-(5'-adenylyl)-L-seryl-[protein] + diphosphate. The enzyme catalyses L-threonyl-[protein] + ATP = 3-O-(5'-adenylyl)-L-threonyl-[protein] + diphosphate. It catalyses the reaction L-tyrosyl-[protein] + ATP = O-(5'-adenylyl)-L-tyrosyl-[protein] + diphosphate. The catalysed reaction is L-histidyl-[protein] + UTP = N(tele)-(5'-uridylyl)-L-histidyl-[protein] + diphosphate. It carries out the reaction L-seryl-[protein] + UTP = O-(5'-uridylyl)-L-seryl-[protein] + diphosphate. The enzyme catalyses L-tyrosyl-[protein] + UTP = O-(5'-uridylyl)-L-tyrosyl-[protein] + diphosphate. Functionally, nucleotidyltransferase involved in the post-translational modification of proteins. It can catalyze the addition of adenosine monophosphate (AMP) or uridine monophosphate (UMP) to a protein, resulting in modifications known as AMPylation and UMPylation. In Clostridium botulinum (strain Eklund 17B / Type B), this protein is Protein nucleotidyltransferase YdiU.